Consider the following 201-residue polypeptide: Recombination protein RecR (201 aa).

The C4-type zinc-finger motif lies at 59–74 (CEICGNMDTENMCRIC). One can recognise a Toprim domain in the interval 82 to 177 (SIIAIVETVA…KISRLASGIP (96 aa)).

The protein belongs to the RecR family.

Functionally, may play a role in DNA repair. It seems to be involved in an RecBC-independent recombinational process of DNA repair. It may act with RecF and RecO. This is Recombination protein RecR from Rickettsia conorii (strain ATCC VR-613 / Malish 7).